A 392-amino-acid polypeptide reads, in one-letter code: 2-oxoisovalerate dehydrogenase subunit beta, mitochondrial (392 aa).

Residues 1 to 50 (MAAVAAFAGWLLRLRAAGADGPWRRLCGAGLSRGFLQSASAYGAAAQRRQ) constitute a mitochondrion transit peptide. Residue tyrosine 152 participates in thiamine diphosphate binding. Positions 178, 180, 181, 228, and 231 each coordinate K(+). Lysine 232 carries the N6-acetyllysine modification. Residue asparagine 233 participates in K(+) binding. Position 241 is an N6-acetyllysine (lysine 241).

As to quaternary structure, heterotetramer of 2 alpha/BCKDHA and 2 beta chains/BCKDHB that forms the branched-chain alpha-keto acid decarboxylase (E1) component of the BCKD complex. The branched-chain alpha-ketoacid dehydrogenase is a large complex composed of three major building blocks E1, E2 and E3. It is organized around E2, a 24-meric cubic core composed of DBT, to which are associated 6 to 12 copies of E1, and approximately 6 copies of the dehydrogenase E3, a DLD dimer. Thiamine diphosphate is required as a cofactor.

The protein resides in the mitochondrion matrix. The enzyme catalyses N(6)-[(R)-lipoyl]-L-lysyl-[protein] + 3-methyl-2-oxobutanoate + H(+) = N(6)-[(R)-S(8)-2-methylpropanoyldihydrolipoyl]-L-lysyl-[protein] + CO2. Functionally, together with BCKDHA forms the heterotetrameric E1 subunit of the mitochondrial branched-chain alpha-ketoacid dehydrogenase (BCKD) complex. The BCKD complex catalyzes the multi-step oxidative decarboxylation of alpha-ketoacids derived from the branched-chain amino-acids valine, leucine and isoleucine producing CO2 and acyl-CoA which is subsequently utilized to produce energy. The E1 subunit catalyzes the first step with the decarboxylation of the alpha-ketoacid forming an enzyme-product intermediate. A reductive acylation mediated by the lipoylamide cofactor of E2 extracts the acyl group from the E1 active site for the next step of the reaction. The polypeptide is 2-oxoisovalerate dehydrogenase subunit beta, mitochondrial (BCKDHB) (Bos taurus (Bovine)).